Here is a 306-residue protein sequence, read N- to C-terminus: tRNA pseudouridine synthase B (306 aa).

The Nucleophile role is filled by D48.

Belongs to the pseudouridine synthase TruB family. Type 1 subfamily.

It catalyses the reaction uridine(55) in tRNA = pseudouridine(55) in tRNA. Responsible for synthesis of pseudouridine from uracil-55 in the psi GC loop of transfer RNAs. The chain is tRNA pseudouridine synthase B from Haemophilus influenzae (strain PittEE).